Reading from the N-terminus, the 436-residue chain is Enolase (436 aa).

Position 167 (Gln-167) interacts with (2R)-2-phosphoglycerate. The active-site Proton donor is the Glu-209. Residues Asp-246, Glu-291, and Asp-318 each coordinate Mg(2+). Residues Lys-343, Arg-372, Ser-373, and Lys-394 each contribute to the (2R)-2-phosphoglycerate site. The Proton acceptor role is filled by Lys-343.

This sequence belongs to the enolase family. Component of the RNA degradosome, a multiprotein complex involved in RNA processing and mRNA degradation. Mg(2+) serves as cofactor.

The protein resides in the cytoplasm. It is found in the secreted. The protein localises to the cell surface. The enzyme catalyses (2R)-2-phosphoglycerate = phosphoenolpyruvate + H2O. Its pathway is carbohydrate degradation; glycolysis; pyruvate from D-glyceraldehyde 3-phosphate: step 4/5. In terms of biological role, catalyzes the reversible conversion of 2-phosphoglycerate (2-PG) into phosphoenolpyruvate (PEP). It is essential for the degradation of carbohydrates via glycolysis. The protein is Enolase of Actinobacillus pleuropneumoniae serotype 5b (strain L20).